The primary structure comprises 661 residues: UvrABC system protein B (661 aa).

Residues A25–P414 form the Helicase ATP-binding domain. Residue G38 to T45 coordinates ATP. The Beta-hairpin motif lies at Y91 to I114. Positions Q430–I592 constitute a Helicase C-terminal domain. The UVR domain occupies K621 to A656.

The protein belongs to the UvrB family. As to quaternary structure, forms a heterotetramer with UvrA during the search for lesions. Interacts with UvrC in an incision complex.

It localises to the cytoplasm. In terms of biological role, the UvrABC repair system catalyzes the recognition and processing of DNA lesions. A damage recognition complex composed of 2 UvrA and 2 UvrB subunits scans DNA for abnormalities. Upon binding of the UvrA(2)B(2) complex to a putative damaged site, the DNA wraps around one UvrB monomer. DNA wrap is dependent on ATP binding by UvrB and probably causes local melting of the DNA helix, facilitating insertion of UvrB beta-hairpin between the DNA strands. Then UvrB probes one DNA strand for the presence of a lesion. If a lesion is found the UvrA subunits dissociate and the UvrB-DNA preincision complex is formed. This complex is subsequently bound by UvrC and the second UvrB is released. If no lesion is found, the DNA wraps around the other UvrB subunit that will check the other stand for damage. The polypeptide is UvrABC system protein B (Rickettsia conorii (strain ATCC VR-613 / Malish 7)).